A 1841-amino-acid polypeptide reads, in one-letter code: Sodium channel protein type 4 subunit alpha (1841 aa).

Topologically, residues 1–131 are cytoplasmic; it reads MASSSLPTLV…RVAIKVLIHA (131 aa). Residues 32-60 are compositionally biased toward basic and acidic residues; that stretch reads AMEEEARLQRNKQMEIEEPERKPRSDLEA. The tract at residues 32 to 63 is disordered; that stretch reads AMEEEARLQRNKQMEIEEPERKPRSDLEAGKN. One copy of the I repeat lies at 113 to 448; it reads MLSPFSIVRR…VVAMAYAEQN (336 aa). The chain crosses the membrane as a helical span at residues 132 to 150; it reads LFSMFIMITILTNCVFMTM. Topologically, residues 151-157 are extracellular; that stretch reads SNPPSWS. The chain crosses the membrane as a helical span at residues 158 to 178; the sequence is KDVEYTFTGIYTFESLIKMLA. Residues 179-192 lie on the Cytoplasmic side of the membrane; it reads RGFCIDDFTFLRDP. Residues 193 to 210 traverse the membrane as a helical segment; that stretch reads WNWLDFSVITMAYVTEFV. Topologically, residues 211-216 are extracellular; that stretch reads DLGNIS. N-linked (GlcNAc...) asparagine glycosylation occurs at Asn-214. Residues 217 to 233 form a helical membrane-spanning segment; it reads ALRTFRVLRALKTITVI. Topologically, residues 234–252 are cytoplasmic; that stretch reads PGLKTIVGALIQSVKKLSD. Residues 253–272 traverse the membrane as a helical segment; it reads VMILTVFCLSVFALVGLQLF. Residues 273-385 lie on the Extracellular side of the membrane; sequence MGNLRQKCVR…PNYGYTSYDT (113 aa). The cysteines at positions 280 and 354 are disulfide-linked. N-linked (GlcNAc...) asparagine glycans are attached at residues Asn-288, Asn-291, Asn-297, Asn-303, Asn-315, Asn-327, and Asn-356. Cysteines 363 and 369 form a disulfide. An intramembrane region (pore-forming) is located at residues 386 to 410; it reads FSWAFLALFRLMTQDYWENLFQLTL. The Extracellular segment spans residues 411 to 417; that stretch reads RAAGKTY. A helical membrane pass occupies residues 418 to 438; it reads MIFFVVIIFLGSFYLINLILA. The Cytoplasmic portion of the chain corresponds to 439–572; it reads VVAMAYAEQN…HIILLIVMDP (134 aa). The disordered stretch occupies residues 484–522; that stretch reads ALEGGEEADGDPTHSKDCNGSLDTSGEKGPPRPSCSAES. An II repeat occupies 554–826; it reads CCAPWVKFKH…QIAIGRIKWG (273 aa). Residues 573 to 591 traverse the membrane as a helical segment; the sequence is FVDLGITICIVLNTLFMAM. Over 592-602 the chain is Extracellular; the sequence is EHYPMTEHFDN. Residues 603 to 622 traverse the membrane as a helical segment; the sequence is VLSVGNLVFTGIFTAEMVLK. Topologically, residues 623-636 are cytoplasmic; the sequence is LIAMDPYEYFQQGW. Residues 637–656 traverse the membrane as a helical segment; it reads NIFDSFIVTLSLVELGLANV. The Extracellular portion of the chain corresponds to 657–658; it reads QG. The helical transmembrane segment at 659–676 threads the bilayer; sequence LSVLRSFRLLRVFKLAKS. At 677 to 692 the chain is on the cytoplasmic side; that stretch reads WPTLNMLIKIIGNSVG. Residues 693–711 form a helical membrane-spanning segment; it reads ALGNLTLVLAIIVFIFAVV. Over 712 to 740 the chain is Extracellular; the sequence is GMQLFGKSYKECVCKIASDCSLPRWHMHD. Cys-725 and Cys-731 are oxidised to a cystine. The pore-forming intramembrane region spans 741 to 761; it reads FFHSFLIVFRILCGEWIETMW. Residues 762–772 lie on the Extracellular side of the membrane; it reads DCMEVAGQAMC. A disulfide bond links Cys-763 and Cys-772. A helical membrane pass occupies residues 773–791; sequence LTVFLMVMVIGNLVVLNLF. The Cytoplasmic portion of the chain corresponds to 792–1026; it reads LALLLSSFSA…ACFKIVEHNW (235 aa). Disordered stretches follow at residues 854–896 and 925–983; these read EPGG…LTDG and SDLE…EGEL. Residues 867–887 are compositionally biased toward basic and acidic residues; sequence EDEKKEPPPEDGNKELKDNHI. Acidic residues-rich tracts occupy residues 925 to 941 and 969 to 983; these read SDLE…FSEP and EDPE…EGEL. Residues 1007–1320 form an III repeat; that stretch reads RGKMWWTLRR…KKYYNAMKKL (314 aa). A helical transmembrane segment spans residues 1027-1044; sequence FETFIVFMILLSSGALAF. Topologically, residues 1045–1057 are extracellular; it reads EDIYIEQRRVIRT. A helical membrane pass occupies residues 1058–1076; it reads ILEYADKVFTYIFILEMLL. Residues 1077–1090 lie on the Cytoplasmic side of the membrane; it reads KWVAYGFKVYFTNA. A helical membrane pass occupies residues 1091-1109; the sequence is WCWLDFLIVDVSIISLVAN. At 1110-1117 the chain is on the extracellular side; that stretch reads WLGYSELG. Residues 1118–1136 traverse the membrane as a helical segment; it reads PIKSLRTLRALRPLRALSR. Over 1137 to 1153 the chain is Cytoplasmic; sequence FEGMRVVVNALLGAIPS. Residues 1154–1173 traverse the membrane as a helical segment; sequence IMNVLLVCLIFWLIFSIMGV. Over 1174-1224 the chain is Extracellular; the sequence is NLFAGKFYYCINTTTSERFDISVVNNKSECESLMYTGQVRWMNVKVNYDNV. Cys-1183 and Cys-1203 are disulfide-bonded. 2 N-linked (GlcNAc...) asparagine glycosylation sites follow: Asn-1185 and Asn-1199. Residues 1225-1246 constitute an intramembrane region (pore-forming); that stretch reads GLGYLSLLQVATFKGWMDIMYA. Over 1247–1263 the chain is Extracellular; the sequence is AVDSREKEEQPDYEVNL. A helical transmembrane segment spans residues 1264-1285; it reads YMYLYFVIFIIFGSFFTLNLFI. Over 1286–1348 the chain is Cytoplasmic; the sequence is GVIIDNFNQQ…MVYDFVTKQV (63 aa). The important for rapid channel inactivation stretch occupies residues 1304-1306; the sequence is IFM. An IV repeat occupies 1329 to 1627; that stretch reads IPRPQNKIQG…WEKFDPDATQ (299 aa). A helical membrane pass occupies residues 1349–1366; sequence FDISIMILICLNMVTMMV. The Extracellular segment spans residues 1367 to 1377; sequence ETDDQSQLKVD. A helical transmembrane segment spans residues 1378–1396; the sequence is ILYNINMVFIIVFTGECVL. Residues 1397–1408 lie on the Cytoplasmic side of the membrane; that stretch reads KMFALRHYYFTI. The chain crosses the membrane as a helical span at residues 1409–1426; the sequence is GWNIFDFVVVILSIVGLA. The Extracellular portion of the chain corresponds to 1427-1439; that stretch reads LSDLIQKYFVSPT. Residues 1440-1456 form a helical membrane-spanning segment; the sequence is LFRVIRLARIGRVLRLI. The Cytoplasmic segment spans residues 1457–1475; the sequence is RGAKGIRTLLFALMMSLPA. The helical transmembrane segment at 1476 to 1493 threads the bilayer; that stretch reads LFNIGLLLFLVMFIYSIF. The Extracellular portion of the chain corresponds to 1494–1515; sequence GMSNFAYVKKESGIDDMFNFET. The pore-forming intramembrane region spans 1516–1538; sequence FGNSIICLFEITTSAGWDGLLNP. At 1539 to 1568 the chain is on the extracellular side; the sequence is ILNSGPPDCDPTLENPGTNIKGDCGNPSIG. A disulfide bridge connects residues Cys-1547 and Cys-1562. The helical transmembrane segment at 1569–1591 threads the bilayer; the sequence is ICFFCSYIIISFLIVVNMYIAII. At 1592 to 1841 the chain is on the cytoplasmic side; sequence LENFNVATEE…VRPGVKESLV (250 aa). In terms of domain architecture, IQ spans 1721-1750; that stretch reads EEVCAIKIQRAYRRHLLQRSVKQASYMYRH. A compositionally biased stretch (basic and acidic residues) spans 1776 to 1794; sequence SEKEDNGVQSQGEKEKDST. Residues 1776–1841 form a disordered region; it reads SEKEDNGVQS…VRPGVKESLV (66 aa). A compositionally biased stretch (polar residues) spans 1801–1812; it reads TEVTAPSSSDTA. The segment covering 1814–1826 has biased composition (pro residues); that stretch reads TPPPPSPPPPSSP.

It belongs to the sodium channel (TC 1.A.1.10) family. Nav1.4/SCN4A subfamily. In terms of assembly, the Nav1.4 voltage-gated sodium channel consists of an ion-conducting alpha subunit SCN4A which is functional on its own and a regulatory beta subunit SCN1B. SCN1B strongly enhances the presence of SCN4A at the cell surface. SCN1B is also required for rapid channel inactivation and recovery after inactivation. It prevents the decrease of channel activity in response to repetitive, high-frequency depolarizations. Interacts with the syntrophins SNTA1, SNTB1 and SNTB2 (via PDZ domain); probably links SCN4A to the actin cytoskeleton and the extracellular matrix via the dystrophin-associated protein complex and regulates its localization in muscle cells. Interacts with TMEM233; probable regulator of the channel. Detected in quadriceps muscle (at protein level). Detected in hind-limb skeletal muscles, but not in heart or brain. Detected at low levels in the myocardium. According to Pubme=26427606 detected also in brain.

The protein resides in the cell membrane. It catalyses the reaction Na(+)(in) = Na(+)(out). The channel is inhibited by tetrodotoxin. In terms of biological role, pore-forming subunit of Nav1.4, a voltage-gated sodium (Nav) channel that directly mediates the depolarizing phase of action potentials in excitable membranes. Navs, also called VGSCs (voltage-gated sodium channels) or VDSCs (voltage-dependent sodium channels), operate by switching between closed and open conformations depending on the voltage difference across the membrane. In the open conformation they allow Na(+) ions to selectively pass through the pore, along their electrochemical gradient. The influx of Na+ ions provokes membrane depolarization, initiating the propagation of electrical signals throughout cells and tissues. Highly expressed in skeletal muscles, Nav1.4 generates the action potential crucial for muscle contraction. This Mus musculus (Mouse) protein is Sodium channel protein type 4 subunit alpha.